The sequence spans 152 residues: Endoribonuclease YbeY (152 aa).

The Zn(2+) site is built by H111, H115, and H121.

It belongs to the endoribonuclease YbeY family. Requires Zn(2+) as cofactor.

It localises to the cytoplasm. Its function is as follows. Single strand-specific metallo-endoribonuclease involved in late-stage 70S ribosome quality control and in maturation of the 3' terminus of the 16S rRNA. The chain is Endoribonuclease YbeY from Pseudomonas fluorescens (strain ATCC BAA-477 / NRRL B-23932 / Pf-5).